The chain runs to 969 residues: MAAHLKKRVYEEFTRVVQQQPLEEPSAKKLRLTKPSKSAALHIDLCKATSPADALQYLLQFARKPVEAESVEGVVRILLEHYYKENDTSVRLKIASLLGLLSKTAGFCPDSIVDDVINTLQNEKSHQVLAQLLDTLLEIGLKLLDIVSHRMRLVDVACKHLSDTSHGVRNKCLQLLGCLGSVEASPAKEVENAVAKDVQKIIGDYFIDQDPRVRTAAIKAMLQLHERGLKLQQAMYNQACKLLTDDYEQVRSAAVELSWVLSQLYSESIVPIPSSNEEIRLVDDAFGKVCHMVSDGSWVVRVQACKLLGSMLQVSPHFLEQTLDKKLMSDLRRKRTAHERAKELYSSGEFSSGRKWGDDAPKEELDTGAVNLIDSGACGAFVHGLEDEMYEVRIAAVESLCLLARSSAPFAEKCLDFLVDMFNDEIEEVRLQSIHTMRKISDNITLREDQLDTVLAVLEDKSRDIREALHELLCCTNVSTKECIQLALVELLKNLSKYPTDRESIWKCLKFLGSRHPTLVLSLVPELLSTHPFFDTPEPDMDDPAYIAVLVLIFNAAKCCPTMPALFSDHTFRHYTYLRDSLSHLVPALNLPSVRWSWIPDVITEAPPEDPSQQFLQLSLERVHNLQHLGSQGTQELLEFTIRDLQRIGELQSDLAGMADFSATYLRCHLLLTKALNEKLWNLAAPLFLKNSLTTNAVKQILEETYKMEFMYSGLETRQVAIIHHMRLQAKALQLLVTARTTKGAEPLFGMCEEFLQEVDFFQRCFISELPHMQDSFVDKLLDLVPRLVNSKPLEMVKILQTTLRQCTFLRLTLPEQIHRASSHIIEPAEESDNPIRFTSGLVVALDVDATLEHVQEPQSTVKVQVVYPDGQVQIIHPKPADFRNPGPGRHRLITQVYLSHTAWTEPCQIEVRLLLAYSSSRSKVMSRASNSTWGESTETVPSTESSTEGTIPFSKPVKVFLMPKPARR.

8 HEAT repeats span residues 68 to 107, 147 to 185, 192 to 230, 231 to 265, 279 to 315, 371 to 407, 408 to 446, and 448 to 486; these read AESVEGVVRILLEHYYKENDTSVRLKIASLLGLLSKTAGF, VSHRMRLVDVACKHLSDTSHGVRNKCLQLLGCLGSVEAS, NAVAKDVQKIIGDYFIDQDPRVRTAAIKAMLQLHERGLK, LQQAMYNQACKLLTDDYEQVRSAAVELSWVLSQLY, IRLVDDAFGKVCHMVSDGSWVVRVQACKLLGSMLQVS, NLIDSGACGAFVHGLEDEMYEVRIAAVESLCLLARSS, APFAEKCLDFLVDMFNDEIEEVRLQSIHTMRKISDNITL, and EDQLDTVLAVLEDKSRDIREALHELLCCTNVSTKECIQL. Over residues 928-949 the composition is skewed to low complexity; the sequence is RASNSTWGESTETVPSTESSTE. A disordered region spans residues 928–950; that stretch reads RASNSTWGESTETVPSTESSTEG.

It belongs to the Integrator subunit 4 family. As to quaternary structure, component of the Integrator complex, composed of core subunits INTS1, INTS2, INTS3, INTS4, INTS5, INTS6, INTS7, INTS8, INTS9/RC74, INTS10, INTS11/CPSF3L, INTS12, INTS13, INTS14 and INTS15. The core complex associates with protein phosphatase 2A subunits PPP2CA and PPP2R1A, to form the Integrator-PP2A (INTAC) complex. INTS4 is part of the RNA endonuclease subcomplex, composed of INTS4, INTS9, INTS11 and inositol hexakisphosphate (InsP6).

The protein localises to the nucleus. It localises to the cytoplasm. Component of the integrator complex, a multiprotein complex that terminates RNA polymerase II (Pol II) transcription in the promoter-proximal region of genes. The integrator complex provides a quality checkpoint during transcription elongation by driving premature transcription termination of transcripts that are unfavorably configured for transcriptional elongation: the complex terminates transcription by (1) catalyzing dephosphorylation of the C-terminal domain (CTD) of Pol II subunit POLR2A/RPB1 and SUPT5H/SPT5, (2) degrading the exiting nascent RNA transcript via endonuclease activity and (3) promoting the release of Pol II from bound DNA. The integrator complex is also involved in terminating the synthesis of non-coding Pol II transcripts, such as enhancer RNAs (eRNAs), small nuclear RNAs (snRNAs), telomerase RNAs and long non-coding RNAs (lncRNAs). In Xenopus laevis (African clawed frog), this protein is Integrator complex subunit 4 (ints4).